Here is a 319-residue protein sequence, read N- to C-terminus: Acetyl-coenzyme A carboxylase carboxyl transferase subunit alpha (319 aa).

The CoA carboxyltransferase C-terminal domain occupies 38–292 (ALDKKAADLL…GKAIASMLAG (255 aa)).

It belongs to the AccA family. Acetyl-CoA carboxylase is a heterohexamer composed of biotin carboxyl carrier protein (AccB), biotin carboxylase (AccC) and two subunits each of ACCase subunit alpha (AccA) and ACCase subunit beta (AccD).

The protein resides in the cytoplasm. It carries out the reaction N(6)-carboxybiotinyl-L-lysyl-[protein] + acetyl-CoA = N(6)-biotinyl-L-lysyl-[protein] + malonyl-CoA. The protein operates within lipid metabolism; malonyl-CoA biosynthesis; malonyl-CoA from acetyl-CoA: step 1/1. Functionally, component of the acetyl coenzyme A carboxylase (ACC) complex. First, biotin carboxylase catalyzes the carboxylation of biotin on its carrier protein (BCCP) and then the CO(2) group is transferred by the carboxyltransferase to acetyl-CoA to form malonyl-CoA. The protein is Acetyl-coenzyme A carboxylase carboxyl transferase subunit alpha of Jannaschia sp. (strain CCS1).